The sequence spans 112 residues: UPF0342 protein SSU05_1260 (112 aa).

The protein belongs to the UPF0342 family.

This Streptococcus suis (strain 05ZYH33) protein is UPF0342 protein SSU05_1260.